A 339-amino-acid polypeptide reads, in one-letter code: MKVESVTKEDTKKSERKIKIAIAKPEDYSNKNVILEKEEELICPVCGSKSIIKDYERAEIVCEMCGCVLQQNLFDVGPEWRAFDHEQRVKRSRVGAPMTYTIHDKGLSTVIDWRNKDSYGKDISADKRAQLYRLRKWQRRIRVSDASERNLAFALSELDRIASKLGLPRNVRENAAVLYRGAVEKGLIRGRSIEGVAAAALYAACRRCKVPRTLDEIAEVSRVDRKEIGRTYRFISRELNIRLAPTNPVDYVPRFASELKLPGEVESKAISILQKAGERGLTSGRGPTGVAAAAIYIASVLQGTRRTQREVADVAGVTEVTIRNRYKELTEHLDIDVTL.

The TFIIB-type zinc-finger motif lies at 39–70; it reads EELICPVCGSKSIIKDYERAEIVCEMCGCVLQ. Residues Cys43, Cys46, Cys62, and Cys65 each contribute to the Zn(2+) site. 2 consecutive repeat copies span residues 156 to 239 and 250 to 331.

The protein belongs to the TFIIB family.

Stabilizes TBP binding to an archaeal box-A promoter. Also responsible for recruiting RNA polymerase II to the pre-initiation complex (DNA-TBP-TFIIB). The sequence is that of Transcription initiation factor IIB from Methanococcus maripaludis (strain DSM 14266 / JCM 13030 / NBRC 101832 / S2 / LL).